A 118-amino-acid chain; its full sequence is Large ribosomal subunit protein uL18 (118 aa).

The segment at 1 to 25 (MISKPDKNKLRQKRHRRVRGKLSGT) is disordered. Basic residues predominate over residues 10–20 (LRQKRHRRVRG).

This sequence belongs to the universal ribosomal protein uL18 family. As to quaternary structure, part of the 50S ribosomal subunit; part of the 5S rRNA/L5/L18/L25 subcomplex. Contacts the 5S and 23S rRNAs.

This is one of the proteins that bind and probably mediate the attachment of the 5S RNA into the large ribosomal subunit, where it forms part of the central protuberance. This Streptococcus pneumoniae (strain Hungary19A-6) protein is Large ribosomal subunit protein uL18.